The following is a 419-amino-acid chain: Phosphoglycerate kinase (419 aa).

Residues Asp42–Asn44, Arg58, His81–Arg84, Arg135, and Arg168 each bind substrate. Residues Lys219, Glu341, and Gly367–Thr370 each bind ATP.

It belongs to the phosphoglycerate kinase family. As to quaternary structure, monomer.

Its subcellular location is the cytoplasm. It carries out the reaction (2R)-3-phosphoglycerate + ATP = (2R)-3-phospho-glyceroyl phosphate + ADP. Its pathway is carbohydrate degradation; glycolysis; pyruvate from D-glyceraldehyde 3-phosphate: step 2/5. This Ralstonia nicotianae (strain ATCC BAA-1114 / GMI1000) (Ralstonia solanacearum) protein is Phosphoglycerate kinase.